Consider the following 445-residue polypeptide: StAR-related lipid transfer protein 3 (445 aa).

Over 1 to 51 the chain is Cytoplasmic; sequence MSKLPRELTRDLERSLPAVASLGSSLSHSQSLSSHLLPPPEKRRAISDVRR. The 172-residue stretch at 46 to 217 folds into the MENTAL domain; that stretch reads ISDVRRTFCL…YSPPESFAGS (172 aa). The helical transmembrane segment at 52 to 72 threads the bilayer; the sequence is TFCLFVTFDLLFISLLWIIEL. The Extracellular portion of the chain corresponds to 73-94; the sequence is NTNTGIRKNLEQEIIQYNFKTS. The helical transmembrane segment at 95-115 threads the bilayer; it reads FFDIFVLAFFRFSGLLLGYAV. Topologically, residues 116 to 120 are cytoplasmic; that stretch reads LRLRH. Residues 121–141 traverse the membrane as a helical segment; it reads WWVIAVTTLVSSAFLIVKVIL. Residues 142-148 are Extracellular-facing; the sequence is SELLSKG. The helical transmembrane segment at 149–169 threads the bilayer; the sequence is AFGYLLPIVSFVLAWLETWFL. At 170-445 the chain is on the cytoplasmic side; that stretch reads DFKVLPQEAE…QRISELGARA (276 aa). The FFAT signature appears at 206 to 212; it reads QFYSPPE. S209 is subject to Phosphoserine. The 214-residue stretch at 230-443 folds into the START domain; sequence SFSAQEREYI…LRQRISELGA (214 aa).

Belongs to the STARD3 family. Homodimer. Interacts (via the MENTAL domain) with STARD3NL. Interacts (via phosphorylated FFAT motif) with VAPA (via MSP domain). Interacts (via phosphorylated FFAT motif) with VAPB (via MSP domain). Interacts (via phosphorylated FFAT motif) with MOSPD2 (via MSP domain); this interaction allows enrichment of MOSPD2 around endosomes. Post-translationally, phosphorylation at Ser-209 is necessary and sufficient for the direct interaction of the phosphorylated FFAT motif with the MSP domain of MOSPD2, VAPA and VAPB and allows the tethering of two membranes that participates in the formation of ER-endosome contacts. Phosphorylation of the FFAT motif leads to conformation changes. Additional phosphorylations around the core FFAT motif (QFYSPPE) are not essential but strengthen the interaction with MOSPD2, VAPA and VAPB. Phosphorylation at Ser-209 of FFAT motif drives membrane tethering between the endoplasmic reticulum and late endosomes via interaction with VAPA and VAPB that in turn allows the efficient transport of sterol mediated by the START domain. As to expression, expressed in retina.

Its subcellular location is the late endosome membrane. It carries out the reaction cholesterol(in) = cholesterol(out). In terms of biological role, sterol-binding protein that mediates cholesterol transport from the endoplasmic reticulum to endosomes. The sterol transport mechanism is triggered by phosphorylation of FFAT motif that leads to membrane tethering between the endoplasmic reticulum and late endosomes via interaction with VAPA and VAPB. Acts as a lipid transfer protein that redirects sterol to the endosome at the expense of the cell membrane and favors membrane formation inside endosomes. May also mediate cholesterol transport between other membranes, such as mitochondria membrane or cell membrane. However, such results need additional experimental evidences; probably mainly mediates cholesterol transport from the endoplasmic reticulum to endosomes. Does not activate transcriptional cholesterol sensing. Able to bind other lipids, such as lutein, a xanthophyll carotenoids that form the macular pigment of the retina. This is StAR-related lipid transfer protein 3 from Homo sapiens (Human).